The following is a 328-amino-acid chain: Ornithine carbamoyltransferase, catabolic (328 aa).

Carbamoyl phosphate contacts are provided by residues 56–59 (STRT), Q83, R107, and 134–137 (HPTQ). L-ornithine is bound by residues N166, D230, and 234–235 (SM). Carbamoyl phosphate contacts are provided by residues 270–271 (CL) and R315.

Belongs to the aspartate/ornithine carbamoyltransferase superfamily. OTCase family.

The protein resides in the cytoplasm. The enzyme catalyses carbamoyl phosphate + L-ornithine = L-citrulline + phosphate + H(+). It participates in amino-acid degradation; L-arginine degradation via ADI pathway; carbamoyl phosphate from L-arginine: step 2/2. Functionally, reversibly catalyzes the transfer of the carbamoyl group from carbamoyl phosphate (CP) to the N(epsilon) atom of ornithine (ORN) to produce L-citrulline. This is Ornithine carbamoyltransferase, catabolic (arcB) from Borreliella afzelii (Borrelia afzelii).